A 1086-amino-acid chain; its full sequence is Endo-1,4-beta-xylanase C (1086 aa).

A signal peptide spans Met1 to Ala31. 2 CBM-cenC domains span residues Gly35 to Val183 and Gly197 to Thr359. In terms of domain architecture, GH10 spans Glu365–Pro710. The active-site Proton donor is the Glu502. Asp556 is an active-site residue. The active-site Nucleophile is Glu620.

This sequence belongs to the glycosyl hydrolase 10 (cellulase F) family.

It catalyses the reaction Endohydrolysis of (1-&gt;4)-beta-D-xylosidic linkages in xylans.. The protein operates within glycan degradation; xylan degradation. In terms of biological role, endoxylanase with high hydrolytic activity on birchwood and oat spelt xylan. Xylotetraose, xylotriose, xylobiose and xylose are the main products from birchwood xylan hydrolysis. Shows increasing activity on xylo-oligosaccharides of increasing length. Displays very low hydrolytic activity on Avicel, carboxymethylcellulose (CMC) and p-nitrophenyl-beta-xylopyranoside. Also shows transxylosidase activity, allowing the formation of xylo-oligosaccharides of higher degree of polymerization than the starting substrate. This Paenibacillus barcinonensis protein is Endo-1,4-beta-xylanase C (xynC).